We begin with the raw amino-acid sequence, 838 residues long: Protein translocase subunit SecA (838 aa).

Residues Q86, 104–108, and D493 each bind ATP; that span reads GEGKT. 2 disordered regions span residues 517–536 and 789–838; these read RRIDNQLRGRSGRQGDPGSS and KVAE…CCGQ. A compositionally biased stretch (basic and acidic residues) spans 801–819; that stretch reads TDGDSKAKRQPVRKKETVG. Zn(2+)-binding residues include C824, C826, C835, and C836.

The protein belongs to the SecA family. In terms of assembly, monomer and homodimer. Part of the essential Sec protein translocation apparatus which comprises SecA, SecYEG and auxiliary proteins SecDF. Other proteins may also be involved. It depends on Zn(2+) as a cofactor.

The protein localises to the cell membrane. It localises to the cytoplasm. The catalysed reaction is ATP + H2O + cellular proteinSide 1 = ADP + phosphate + cellular proteinSide 2.. Its function is as follows. Part of the Sec protein translocase complex. Interacts with the SecYEG preprotein conducting channel. Has a central role in coupling the hydrolysis of ATP to the transfer of proteins into and across the cell membrane, serving as an ATP-driven molecular motor driving the stepwise translocation of polypeptide chains across the membrane. This Halalkalibacterium halodurans (strain ATCC BAA-125 / DSM 18197 / FERM 7344 / JCM 9153 / C-125) (Bacillus halodurans) protein is Protein translocase subunit SecA.